The primary structure comprises 616 residues: MRPPRRSAPILVCAISMATALSNATVHRDAGTVESTPPPDDEDNYTAKYYDDSIYFNIYDGTNPTPRRRTLPEIISKFSTSEMSRLGGLKAFVPVDYTPTTTLEDIEDLLNYAICDDNSCGCLIETEARIMFGDIIICVPLSAESRGVRNLKSRIMPMGLSQILSSGLGLHFSLLYGAFGSNYNSLAYMERLKPLTAMTAIAFCPMTSKLELRQNYRLEKARCELIVNIELLKIQNHGGQTIKTLTSFAIVRKDSDGQDWETCTRFASVSIEDILRSKPAANGTCCPPRDVHHDRPTLQSSNSWTRTEYFEPWQDVVDAYVPINDNHCPNDSYVVFQTLQGHEWCSRLNKNDTKNYLSSVLAFKNALYETEELMETIGMRLASQILSLVGQRGTSIRNIDPAIVSALWHSLPEKLTTTNIKYDIASPTHMSPALCTIFIQTGTSKQRFRNAGLLMVNNIFTVQARYSKQNMFEKKIYGYEHLGQALCEDGEILFQNAGQKFCRPFTDNRTIVYTMQDQVQRPWSVTWMDFNLVISDYGRAVIENLTESAMSAHKNGPRYLQMETFISDLFRYECHRDNRYVLEKKLQMFYPTTHMNELLFYPSDPTLPSPYGNGHY.

The first 24 residues, 1 to 24, serve as a signal peptide directing secretion; the sequence is MRPPRRSAPILVCAISMATALSNA. 5 N-linked (GlcNAc...) asparagine; by host glycosylation sites follow: Asn23, Asn44, Asn282, Asn330, and Asn351.

In terms of assembly, interacts with isoform gQ2. The heterodimer gQ1-gQ2 associates with the glycoprotein complex gH-gL to form a tetrameric complex. The gH/gL/gQ1/gQ2 complex binds to host TNFRSF4. In terms of processing, glycosylated by host.

Its subcellular location is the virion. It localises to the host endoplasmic reticulum lumen. Its function is as follows. Plays a role in virus entry by participating in host receptor binding at the cell surface. This Homo sapiens (Human) protein is Glycoprotein Q1.